The sequence spans 410 residues: Voltage-dependent chloride channel 1, chloroplastic (410 aa).

Residues 1 to 110 (MYQSMNLSVS…RHLLSSFSSR (110 aa)) are Lumenal, thylakoid-facing. The chain crosses the membrane as a helical span at residues 111–131 (VILSLIPPVFFFTSVAVVIAS). Residues 132 to 147 (YNSAVALDWLPGIFPI) lie on the Stromal side of the membrane. The helical transmembrane segment at 148–168 (LRSSSLPYQLTAPALALLLVF) threads the bilayer. The Lumenal, thylakoid portion of the chain corresponds to 169 to 315 (RTEASYSRYE…PLSYTRLTSR (147 aa)). The next 2 helical transmembrane spans lie at 316 to 336 (FLVF…HWIV) and 337 to 357 (VPAT…GVLI). At 358–410 (EEPFPMLALDELCDLVHSNIQEAVKSEKVIRNRIIAKIKLHEFKHSSNGRHRS) the chain is on the lumenal, thylakoid side.

It belongs to the anion channel-forming bestrophin (TC 1.A.46) family. Voltage-dependent chloride channel subfamily. In terms of tissue distribution, mostly expressed in flowers and leaves and, to a lower extent, in stems and roots.

Its subcellular location is the plastid. It localises to the chloroplast thylakoid membrane. The catalysed reaction is chloride(in) = chloride(out). Its activity is regulated as follows. More active at positive than at negative voltages. Repressed by the general anion channel inhibitors dithiocyanatostilbene-2,20-disulphonic acid (DIDS) and niflumic acid. In terms of biological role, voltage-dependent chloride (Cl) channel critical for proton motive force (PMF) partitioning across the thylakoid membrane by anion influx into the lumen during illumination, thus being required for photoprotection under fluctuating light conditions. Influences thylakoid ultrastructure, including lumen size and organization. During photosynthetic response on transition from dark to low light, involved in a sequential mechanism of adaptation; VCCN1 and CLCe first trigger the activation of photoprotection, which is later down-regulated by KEA3 to a low steady state, while adjusting electron transport. On transition from low to high light, accelerates the activation of photoprotection by building up a pH gradient across the thylakoid membrane. In Arabidopsis thaliana (Mouse-ear cress), this protein is Voltage-dependent chloride channel 1, chloroplastic.